The following is a 523-amino-acid chain: 2-isopropylmalate synthase (523 aa).

In terms of domain architecture, Pyruvate carboxyltransferase spans 5-267; the sequence is VIIFDTTLRD…ETGINAKEIH (263 aa). Residues aspartate 14, histidine 202, histidine 204, and asparagine 238 each contribute to the Mn(2+) site. The regulatory domain stretch occupies residues 392-523; that stretch reads KLQQLVVHSD…QQNKRELGGV (132 aa).

The protein belongs to the alpha-IPM synthase/homocitrate synthase family. LeuA type 1 subfamily. In terms of assembly, homodimer. Mn(2+) serves as cofactor.

It localises to the cytoplasm. It carries out the reaction 3-methyl-2-oxobutanoate + acetyl-CoA + H2O = (2S)-2-isopropylmalate + CoA + H(+). It participates in amino-acid biosynthesis; L-leucine biosynthesis; L-leucine from 3-methyl-2-oxobutanoate: step 1/4. Functionally, catalyzes the condensation of the acetyl group of acetyl-CoA with 3-methyl-2-oxobutanoate (2-ketoisovalerate) to form 3-carboxy-3-hydroxy-4-methylpentanoate (2-isopropylmalate). This Shewanella pealeana (strain ATCC 700345 / ANG-SQ1) protein is 2-isopropylmalate synthase.